We begin with the raw amino-acid sequence, 141 residues long: Cystatin (141 aa).

The N-terminal stretch at 1–26 is a signal peptide; it reads MVHSQLPVAAPLRLLCALLLLPSATM. The Cystatin domain maps to 29 to 129; the sequence is GGLYPRSVTD…CHFQVWSRPW (101 aa). The Secondary area of contact signature appears at 73–77; that stretch reads QVVTG. 2 disulfides stabilise this stretch: Cys91–Cys107 and Cys120–Cys140.

Belongs to the cystatin family. Expressed by the venom gland at an extremely low level (at protein level).

The protein localises to the secreted. In terms of biological role, inhibits various C1 cysteine proteases including cathepsin L, papain and cathepsin B. This protein has no toxic activity and its function in the venom is unknown. It may play a role as a housekeeping or regulatory protein. The sequence is that of Cystatin from Tropidechis carinatus (Australian rough-scaled snake).